The following is a 284-amino-acid chain: D-tagatose-1,6-bisphosphate aldolase subunit GatY (284 aa).

Aspartate 82 functions as the Proton donor in the catalytic mechanism. The Zn(2+) site is built by histidine 83 and histidine 180. A dihydroxyacetone phosphate-binding site is contributed by glycine 181. Histidine 208 serves as a coordination point for Zn(2+). Dihydroxyacetone phosphate is bound by residues 209–211 and 230–233; these read GAS and NVAT.

The protein belongs to the class II fructose-bisphosphate aldolase family. TagBP aldolase GatY subfamily. As to quaternary structure, forms a complex with GatZ. Zn(2+) is required as a cofactor.

The catalysed reaction is D-tagatofuranose 1,6-bisphosphate = D-glyceraldehyde 3-phosphate + dihydroxyacetone phosphate. Its pathway is carbohydrate metabolism; D-tagatose 6-phosphate degradation; D-glyceraldehyde 3-phosphate and glycerone phosphate from D-tagatose 6-phosphate: step 2/2. Catalytic subunit of the tagatose-1,6-bisphosphate aldolase GatYZ, which catalyzes the reversible aldol condensation of dihydroxyacetone phosphate (DHAP or glycerone-phosphate) with glyceraldehyde 3-phosphate (G3P) to produce tagatose 1,6-bisphosphate (TBP). Requires GatZ subunit for full activity and stability. Is involved in the catabolism of galactitol. The polypeptide is D-tagatose-1,6-bisphosphate aldolase subunit GatY (Escherichia coli O6:K15:H31 (strain 536 / UPEC)).